The chain runs to 365 residues: Coxsackievirus and adenovirus receptor homolog (365 aa).

A signal peptide spans 1-19; sequence MALLLCFVLLCGVADFTSS. Ig-like C2-type domains follow at residues 20–136 and 141–228; these read LSIT…FLLT and PSGT…LRLD. Over 20-238 the chain is Extracellular; sequence LSITTPEQRI…VVPPSNRAGT (219 aa). Cystine bridges form between cysteine 41/cysteine 120, cysteine 146/cysteine 223, and cysteine 162/cysteine 212. The N-linked (GlcNAc...) asparagine glycan is linked to asparagine 106. A helical membrane pass occupies residues 239–259; sequence IAGAVIGTLLALVLIGAILFC. 2 S-palmitoyl cysteine lipidation sites follow: cysteine 259 and cysteine 260. Residues 260–365 lie on the Cytoplasmic side of the membrane; it reads CHKKRREEKY…PAQSKDGSIV (106 aa). The segment covering 269–282 has biased composition (basic and acidic residues); sequence YEKEVHHDIREDVP. The segment at 269–315 is disordered; that stretch reads YEKEVHHDIREDVPPPKSRTSTARSYIGSNHSSLGSMSPSNMEGYSK. Residues 286-315 are compositionally biased toward polar residues; the sequence is SRTSTARSYIGSNHSSLGSMSPSNMEGYSK. Phosphoserine occurs at positions 297, 304, 306, 323, 332, and 363. Residues 360 to 365 carry the PDZ-binding motif; that stretch reads KDGSIV.

As to quaternary structure, monomer. May form homodimer. Interacts with LNX, MAGI1, DLG4, PRKCABP, TJP1 and CTNNB1. Interacts with MPDZ; recruits MPDZ to intercellular contact sites. Interacts with JAML (homodimeric form). Post-translationally, N-glycosylated. Palmitoylated on Cys-259 and/or Cys-260; required for proper localization to the plasma membrane. Expressed in heart, brain, spleen, lung, liver, muscle, kidney, testis, spleen and skeletal muscle.

It is found in the cell membrane. Its subcellular location is the basolateral cell membrane. The protein localises to the cell junction. It localises to the tight junction. The protein resides in the adherens junction. Component of the epithelial apical junction complex that may function as a homophilic cell adhesion molecule and is essential for tight junction integrity. Also involved in transepithelial migration of leukocytes through adhesive interactions with JAML a transmembrane protein of the plasma membrane of leukocytes. The interaction between both receptors also mediates the activation of gamma-delta T-cells, a subpopulation of T-cells residing in epithelia and involved in tissue homeostasis and repair. Upon epithelial CXADR-binding, JAML induces downstream cell signaling events in gamma-delta T-cells through PI3-kinase and MAP kinases. It results in proliferation and production of cytokines and growth factors by T-cells that in turn stimulate epithelial tissues repair. The protein is Coxsackievirus and adenovirus receptor homolog (Cxadr) of Rattus norvegicus (Rat).